Consider the following 1241-residue polypeptide: Plasma membrane calcium-transporting ATPase 4 (1241 aa).

At 1-92 (MTNPSDRVLP…NVIPPKKPKT (92 aa)) the chain is on the cytoplasmic side. S13 is modified (phosphoserine). Residues 93–113 (FLELVWEALQDVTLIILEIAA) traverse the membrane as a helical segment. The Extracellular segment spans residues 114-150 (IISLVLSFYRPAGEENELCGQVATTPEDENEAQAGWI). A helical transmembrane segment spans residues 151–171 (EGAAILFSVIIVVLVTAFNDW). Topologically, residues 172 to 356 (SKEKQFRGLQ…KEKSVLQGKL (185 aa)) are cytoplasmic. The tract at residues 294 to 318 (EGEKKKKGKKQGVPENRNKAKTQDG) is disordered. A Phosphoserine modification is found at S328. The helical transmembrane segment at 357–376 (TRLAVQIGKAGLLMSALTVF) threads the bilayer. Topologically, residues 377–409 (ILILYFVIDNFVINRRPWLPECTPIYIQYFVKF) are extracellular. The helical transmembrane segment at 410–427 (FIIGITVLVVAVPEGLPL) threads the bilayer. Topologically, residues 428–840 (AVTISLAYSV…MWGRNVYDSI (413 aa)) are cytoplasmic. D465 serves as the catalytic 4-aspartylphosphate intermediate. Mg(2+) is bound by residues D785 and D789. Residues 841–860 (SKFLQFQLTVNVVAVIVAFT) traverse the membrane as a helical segment. Residues 861–870 (GACITQDSPL) lie on the Extracellular side of the membrane. Residues 871-891 (KAVQMLWVNLIMDTFASLALA) form a helical membrane-spanning segment. Residues 892–911 (TEPPTESLLKRRPYGRNKPL) are Cytoplasmic-facing. The helical transmembrane segment at 912–934 (ISRTMMKNILGHAFYQLIVIFIL) threads the bilayer. Residues 935 to 952 (VFAGEKFFDIDSGRKAPL) are Extracellular-facing. Residues 953–974 (HSPPSQHYTIVFNTFVLMQLFN) traverse the membrane as a helical segment. At 975-993 (EINSRKIHGEKNVFSGIYR) the chain is on the cytoplasmic side. A helical membrane pass occupies residues 994–1015 (NIIFCSVVLGTFICQIFIVEFG). At 1016–1025 (GKPFSCTSLS) the chain is on the extracellular side. Residues 1026-1047 (LSQWLWCLFIGIGELLWGQFIS) form a helical membrane-spanning segment. Over 1048-1241 (AIPTRSLKFL…SSLQSLETSV (194 aa)) the chain is Cytoplasmic. Positions 1086–1103 (LRRGQILWFRGLNRIQTQ) are calmodulin-binding subdomain A. At T1102 the chain carries Phosphothreonine; by PKC. A calmodulin-binding subdomain B region spans residues 1104–1113 (IDVINTFQTG).

This sequence belongs to the cation transport ATPase (P-type) (TC 3.A.3) family. Type IIB subfamily. In terms of assembly, interacts with PDZD11. Interacts with SLC35G1 and STIM1. Interacts with calmodulin. In terms of tissue distribution, isoform XB is the most abundant isoform and is expressed ubiquitously. Isoforms containing segment Z have only been detected in heart, while isoforms containing segment a have been found in heart, stomach and brain cortex.

It is found in the cell membrane. The protein resides in the cell projection. The protein localises to the cilium. Its subcellular location is the flagellum membrane. It carries out the reaction Ca(2+)(in) + ATP + H2O = Ca(2+)(out) + ADP + phosphate + H(+). Its activity is regulated as follows. Activated by calcium/calmodulin. Its function is as follows. Calcium/calmodulin-regulated and magnesium-dependent enzyme that catalyzes the hydrolysis of ATP coupled with the transport of calcium out of the cell. By regulating sperm cell calcium homeostasis, may play a role in sperm motility. The polypeptide is Plasma membrane calcium-transporting ATPase 4 (Homo sapiens (Human)).